We begin with the raw amino-acid sequence, 353 residues long: MKILVINPGSTSTKIAVYENETPLLVRNIKHTVEELSVYPQVIDQFEFRKNLVLQELEANGIPFAFDAVIGRGGLVKPIPGGVYAVNEAMKQDTLHAMRTHACNLGGLIAAELAASLPDCPAFIADPGVVDELEDVARISGSPLMPKITIWHALNQKAIARRFAKEQGTKYEELDLIICHLGGGISIAVHQHGKAIDANNALDGEGPFSPERAGTLPAGQLIDICYSGQFTKDELKKRISGRAGLTAHLGTTDVPAIIKAIEEGDKKAELILDAMIYNVAKAIGGAATVLCGKVDAILLTGGIAYSDYIISRLKKRISFLAPIHVYPGEGEMESLAFNALGALRGELPVQIYK.

The protein belongs to the acetokinase family.

Its subcellular location is the cytoplasm. The catalysed reaction is butanoate + ATP = butanoyl phosphate + ADP. The protein is Probable butyrate kinase of Bacteroides thetaiotaomicron (strain ATCC 29148 / DSM 2079 / JCM 5827 / CCUG 10774 / NCTC 10582 / VPI-5482 / E50).